We begin with the raw amino-acid sequence, 146 residues long: Hemoglobin subunit beta-1 (146 aa).

The Globin domain maps to 2–146 (EWTDQERATI…VVSALGKQYH (145 aa)). Residues His-63 and His-92 each contribute to the heme b site.

This sequence belongs to the globin family. In terms of assembly, hb1 is a heterotetramer of two alpha-1 chains and two beta-1 chains. Hb2 is a heterotetramer of two alpha-2 chains and two beta-1 chains. HbC is a heterotetramer of two alpha-1 chains and two beta-2 chains. As to expression, red blood cells.

Its function is as follows. Involved in oxygen transport from gills to the various peripheral tissues. This Eleginops maclovinus (Patagonian blennie) protein is Hemoglobin subunit beta-1.